We begin with the raw amino-acid sequence, 1031 residues long: Protein translocase subunit SecA (1031 aa).

ATP contacts are provided by residues Gln143, 161–165 (GEGKT), and Asp662. Cys1015, Cys1017, Cys1026, and Cys1027 together coordinate Zn(2+).

This sequence belongs to the SecA family. As to quaternary structure, monomer and homodimer. Part of the essential Sec protein translocation apparatus which comprises SecA, SecYEG and auxiliary proteins SecDF. Other proteins may also be involved. Requires Zn(2+) as cofactor.

Its subcellular location is the cell inner membrane. The protein localises to the cytoplasm. The catalysed reaction is ATP + H2O + cellular proteinSide 1 = ADP + phosphate + cellular proteinSide 2.. Functionally, part of the Sec protein translocase complex. Interacts with the SecYEG preprotein conducting channel. Has a central role in coupling the hydrolysis of ATP to the transfer of proteins into and across the cell membrane, serving as an ATP-driven molecular motor driving the stepwise translocation of polypeptide chains across the membrane. The sequence is that of Protein translocase subunit SecA from Chlorobaculum tepidum (strain ATCC 49652 / DSM 12025 / NBRC 103806 / TLS) (Chlorobium tepidum).